The primary structure comprises 91 residues: Large ribosomal subunit protein uL23c (91 aa).

Belongs to the universal ribosomal protein uL23 family. As to quaternary structure, part of the 50S ribosomal subunit.

It localises to the plastid. The protein localises to the chloroplast. Functionally, binds to 23S rRNA. The sequence is that of Large ribosomal subunit protein uL23c (rpl23) from Marchantia polymorpha (Common liverwort).